The primary structure comprises 280 residues: Large ribosomal subunit protein uL2 (280 aa).

The interval asparagine 226–arginine 280 is disordered. 2 stretches are compositionally biased toward basic residues: residues lysine 254–alanine 264 and arginine 271–arginine 280.

It belongs to the universal ribosomal protein uL2 family. In terms of assembly, part of the 50S ribosomal subunit. Forms a bridge to the 30S subunit in the 70S ribosome.

Its function is as follows. One of the primary rRNA binding proteins. Required for association of the 30S and 50S subunits to form the 70S ribosome, for tRNA binding and peptide bond formation. It has been suggested to have peptidyltransferase activity; this is somewhat controversial. Makes several contacts with the 16S rRNA in the 70S ribosome. In Roseobacter denitrificans (strain ATCC 33942 / OCh 114) (Erythrobacter sp. (strain OCh 114)), this protein is Large ribosomal subunit protein uL2.